The sequence spans 113 residues: N-alpha-acetyltransferase 38-A, NatC auxiliary subunit (113 aa).

The segment at 1 to 29 is disordered; it reads MAAVLEENGCSRQSSPSAGDSDAEPGDTA. The Sm domain occupies 28-106; it reads TARHKLESLL…IVSIQVELES (79 aa).

The protein belongs to the snRNP Sm proteins family. In terms of assembly, component of the N-terminal acetyltransferase C (NatC) complex, which is composed of naa35, naa38 and naa30.

The protein resides in the cytoplasm. Functionally, auxillary component of the N-terminal acetyltransferase C (NatC) complex which catalyzes acetylation of N-terminal methionine residues. This Xenopus laevis (African clawed frog) protein is N-alpha-acetyltransferase 38-A, NatC auxiliary subunit (naa38-a).